The primary structure comprises 81 residues: Styelin-D (81 aa).

A signal peptide spans 1–22 (MQMKATILIVLVALFMIQQSEA). At Trp-24 the chain carries 6'-bromotryptophan. 3,4-dihydroxyarginine is present on Arg-26. 3 positions are modified to 4,5-dihydroxylysine: Lys-27, Lys-30, and Lys-34. 2 positions are modified to 3',4'-dihydroxyphenylalanine: Tyr-36 and Tyr-37. Lys-38 carries the 4,5-dihydroxylysine modification. Position 40 is a 5-hydroxylysine (Lys-40). 3',4'-dihydroxyphenylalanine occurs at positions 41 and 42. Lys-44 is modified (5-hydroxylysine). Leu-54 is subject to Leucine amide. A propeptide spans 56-81 (DMTDEEFQDFMKEVEQAREEELQSRQ) (removed in mature form).

Post-translationally, contains L-DOPA (3',4'-dihydroxyphenylalanine). In terms of tissue distribution, hemocytes and pharyngeal tissues.

The protein resides in the secreted. In terms of biological role, bactericidal against several Gram-positive and Gram-negative bacteria. Plays a significant role in the innate immune mechanisms of S.clava. The sequence is that of Styelin-D from Styela clava (Sea squirt).